The sequence spans 281 residues: Trypsin zeta (281 aa).

The signal sequence occupies residues 1 to 23 (MSSSSWLGCLLAVLLSALALSQG). Residues 24-39 (LPLLEDLDENSFPDGR) constitute a propeptide, activation peptide. The 240-residue stretch at 40–279 (IVGGYVTDIA…LRPWIDAVRA (240 aa)) folds into the Peptidase S1 domain. Cys73 and Cys89 are oxidised to a cystine. Catalysis depends on charge relay system residues His88 and Asp135. 2 disulfides stabilise this stretch: Cys199/Cys219 and Cys231/Cys255. Ser235 serves as the catalytic Charge relay system.

This sequence belongs to the peptidase S1 family.

Its subcellular location is the secreted. It localises to the extracellular space. The catalysed reaction is Preferential cleavage: Arg-|-Xaa, Lys-|-Xaa.. The chain is Trypsin zeta (zetaTry) from Drosophila erecta (Fruit fly).